The sequence spans 160 residues: uncharacterized protein (160 aa).

One can recognise an N-acetyltransferase domain in the interval 7–151 (LLINYKTLEE…NPLIWHPDMD (145 aa)).

This is an uncharacterized protein from Bacillus subtilis (strain 168).